A 122-amino-acid polypeptide reads, in one-letter code: Large ribosomal subunit protein bL19 (122 aa).

It belongs to the bacterial ribosomal protein bL19 family.

Functionally, this protein is located at the 30S-50S ribosomal subunit interface and may play a role in the structure and function of the aminoacyl-tRNA binding site. This chain is Large ribosomal subunit protein bL19, found in Acinetobacter baumannii (strain AB307-0294).